We begin with the raw amino-acid sequence, 442 residues long: tRNA modification GTPase MnmE (442 aa).

Arginine 22, glutamate 79, and lysine 119 together coordinate (6S)-5-formyl-5,6,7,8-tetrahydrofolate. In terms of domain architecture, TrmE-type G spans 216–366 (GIKTCLVGAP…LLEKIKSIFA (151 aa)). K(+) is bound at residue asparagine 226. GTP contacts are provided by residues 226 to 231 (NSGKSS), 245 to 251 (SEIPGTT), and 270 to 273 (DTAG). Mg(2+) is bound at residue serine 230. K(+)-binding residues include serine 245, isoleucine 247, and threonine 250. Residue threonine 251 participates in Mg(2+) binding. Residue lysine 442 coordinates (6S)-5-formyl-5,6,7,8-tetrahydrofolate.

It belongs to the TRAFAC class TrmE-Era-EngA-EngB-Septin-like GTPase superfamily. TrmE GTPase family. As to quaternary structure, homodimer. Heterotetramer of two MnmE and two MnmG subunits. The cofactor is K(+).

Its subcellular location is the cytoplasm. In terms of biological role, exhibits a very high intrinsic GTPase hydrolysis rate. Involved in the addition of a carboxymethylaminomethyl (cmnm) group at the wobble position (U34) of certain tRNAs, forming tRNA-cmnm(5)s(2)U34. This Mesomycoplasma hyopneumoniae (strain 232) (Mycoplasma hyopneumoniae) protein is tRNA modification GTPase MnmE.